The chain runs to 463 residues: Polyadenylate-binding protein-interacting protein 1 (463 aa).

Positions 1 to 86 (MSDGFERAPG…HKRTSPAAQL (86 aa)) are disordered. Residues 145–362 (TEYVQDFLNH…LKLVELRSSN (218 aa)) enclose the MIF4G domain. The interval 420–442 (RDYDENGTDGGDSYFEDDDDNEM) is disordered. A compositionally biased stretch (acidic residues) spans 433-442 (YFEDDDDNEM).

As to quaternary structure, interacts with the RRM1-RRM2 and C-terminal regions of epabp.

The protein localises to the cytoplasm. Its function is as follows. Acts as a coactivator in the regulation of translation initiation of poly(A)-containing mRNAs. The sequence is that of Polyadenylate-binding protein-interacting protein 1 from Xenopus laevis (African clawed frog).